The following is a 265-amino-acid chain: MKSQTTKPLQQSISTNLSSNKEMQVKRLSVEGNIAVGKSTFLRLLSNTFQEWSFATEPLKKWQNIQSTSFQTTTSSKPPMDNLLQLMYDDPKRWSYTFQTFSCMSRFKIQIQPLSEPVLKQQEHVQIFERSVYSDRYIFAKTLYELQHLNEMEWTLYQEWHTFLIQEFSRRVALDGIIYLWATPEKCFERLQRRARKEEKTLQLQYLEKLHDQHESWLTKKTTEVSFENMKNIPVLLLNVEEDFENNSAAGDELNNRVKAFVAGL.

32–40 is a binding site for ATP; that stretch reads GNIAVGKST. The substrate site is built by Glu-57, Tyr-88, Gln-99, and Arg-106. The active-site Proton acceptor is the Glu-129. Residues Arg-130 and Asp-135 each contribute to the substrate site. An ATP-binding site is contributed by 190 to 194; sequence RLQRR. Residue Glu-199 coordinates substrate. 242–244 contributes to the ATP binding site; that stretch reads EDF.

This sequence belongs to the DCK/DGK family. In terms of assembly, homodimer.

Its subcellular location is the mitochondrion. The enzyme catalyses 2'-deoxyguanosine + ATP = dGMP + ADP + H(+). Phosphorylates deoxyguanosine in the mitochondrial matrix with high efficiency but shows very low activity against other deoxynucleosides. In Xenopus laevis (African clawed frog), this protein is Deoxyguanosine kinase, mitochondrial.